A 574-amino-acid chain; its full sequence is Arginine--tRNA ligase (574 aa).

Residues 126 to 136 (PNIAKRMHVGH) carry the 'HIGH' region motif.

Belongs to the class-I aminoacyl-tRNA synthetase family. Monomer.

Its subcellular location is the cytoplasm. It carries out the reaction tRNA(Arg) + L-arginine + ATP = L-arginyl-tRNA(Arg) + AMP + diphosphate. The chain is Arginine--tRNA ligase from Chloroflexus aggregans (strain MD-66 / DSM 9485).